We begin with the raw amino-acid sequence, 647 residues long: Threonine--tRNA ligase (647 aa).

The TGS domain maps to 1–61 (MIKITFPDGA…EEDGSIEIVT (61 aa)). The catalytic stretch occupies residues 240–538 (DHRKLGKELD…LIETYKGAFP (299 aa)). Cys-334, His-385, and His-515 together coordinate Zn(2+).

The protein belongs to the class-II aminoacyl-tRNA synthetase family. As to quaternary structure, homodimer. Zn(2+) serves as cofactor.

Its subcellular location is the cytoplasm. It carries out the reaction tRNA(Thr) + L-threonine + ATP = L-threonyl-tRNA(Thr) + AMP + diphosphate + H(+). In terms of biological role, catalyzes the attachment of threonine to tRNA(Thr) in a two-step reaction: L-threonine is first activated by ATP to form Thr-AMP and then transferred to the acceptor end of tRNA(Thr). Also edits incorrectly charged L-seryl-tRNA(Thr). This Streptococcus agalactiae serotype V (strain ATCC BAA-611 / 2603 V/R) protein is Threonine--tRNA ligase.